The sequence spans 751 residues: Dual specificity tyrosine-phosphorylation-regulated kinase 1A (751 aa).

Residues 59–68 are compositionally biased toward polar residues; sequence YNDQIQQPLP. Disordered regions lie at residues 59 to 81 and 104 to 129; these read YNDQ…RDPA and YAKK…KVYN. The short motif at 109 to 126 is the Bipartite nuclear localization signal element; the sequence is RRHQQGQGDDSSHKKERK. Positions 151 to 471 constitute a Protein kinase domain; sequence YEIDSLIGKG…PYYALQHSFF (321 aa). Residues 157–165, Lys180, and 230–233 contribute to the ATP site; these read IGKGSFGQV and FEML. Asp279 functions as the Proton acceptor in the catalytic mechanism. The span at 477–493 shows a compositional bias: polar residues; sequence EGTNTSNSVSTSPAMEQ. 3 disordered regions span residues 477 to 532, 580 to 667, and 730 to 751; these read EGTN…HSGG, HVPS…GNQA, and GMDR…VASS. A compositionally biased stretch (low complexity) spans 494–517; the sequence is SQSSGTTSSTSSSSGGSSGTSNSG. The histidine-rich domain (HRD) stretch occupies residues 585–613; sequence QQNVPHHHGNGSHHHHHHHHHHHGQHVLS. Residues 589-609 are compositionally biased toward basic residues; sequence PHHHGNGSHHHHHHHHHHHGQ. Residues 611–622 show a composition bias toward polar residues; sequence VLSNRTRTRIYN. Low complexity-rich tracts occupy residues 623–633 and 642–660; these read SPSTSSSTQDS and SMTS…SSST. A compositionally biased stretch (polar residues) spans 742 to 751; sequence CVQQSPVASS.

Belongs to the protein kinase superfamily. CMGC Ser/Thr protein kinase family. MNB/DYRK subfamily. Post-translationally, autophosphorylated on tyrosine residues.

It is found in the nucleus. It localises to the nucleus speckle. The enzyme catalyses L-seryl-[protein] + ATP = O-phospho-L-seryl-[protein] + ADP + H(+). It carries out the reaction L-threonyl-[protein] + ATP = O-phospho-L-threonyl-[protein] + ADP + H(+). The catalysed reaction is L-tyrosyl-[protein] + ATP = O-phospho-L-tyrosyl-[protein] + ADP + H(+). It catalyses the reaction [DNA-directed RNA polymerase] + ATP = phospho-[DNA-directed RNA polymerase] + ADP + H(+). Its function is as follows. Dual-specificity kinase which possesses both serine/threonine and tyrosine kinase activities. Exhibits a substrate preference for proline at position P+1 and arginine at position P-3. Plays an important role in double-strand breaks (DSBs) repair following DNA damage. Mechanistically, phosphorylates RNF169 and increases its ability to block accumulation of TP53BP1 at the DSB sites thereby promoting homologous recombination repair (HRR). Also acts as a positive regulator of transcription by acting as a CTD kinase that mediates phosphorylation of the CTD (C-terminal domain) of the large subunit of RNA polymerase II (RNAP II) POLR2A. Modulates alternative splicing by phosphorylating the splice factor SRSF6. Phosphorylates SEPTIN4, SEPTIN5 and SF3B1. The chain is Dual specificity tyrosine-phosphorylation-regulated kinase 1A from Xenopus tropicalis (Western clawed frog).